Consider the following 993-residue polypeptide: DNA double-strand break repair Rad50 ATPase (993 aa).

ATP-binding positions include R12, 32–38, and Q133; that span reads NGSGKSS. Coiled coils occupy residues 192–222 and 402–493; these read LENL…LEKL and EELK…LEKT. In terms of domain architecture, Zinc-hook spans 452-556; it reads ENELKEKYED…KLNEIDSFKL (105 aa). 2 residues coordinate Zn(2+): C497 and C500. Coiled coils occupy residues 570 to 612, 646 to 677, and 702 to 731; these read KVEE…LEND, DSSK…EINL, and ETEK…VLKN.

It belongs to the SMC family. RAD50 subfamily. As to quaternary structure, homodimer. Forms a heterotetramer composed of two Mre11 subunits and two Rad50 subunits. Zn(2+) serves as cofactor.

In terms of biological role, part of the Rad50/Mre11 complex, which is involved in the early steps of DNA double-strand break (DSB) repair. The complex may facilitate opening of the processed DNA ends to aid in the recruitment of HerA and NurA. Rad50 controls the balance between DNA end bridging and DNA resection via ATP-dependent structural rearrangements of the Rad50/Mre11 complex. The polypeptide is DNA double-strand break repair Rad50 ATPase (Methanococcus maripaludis (strain DSM 14266 / JCM 13030 / NBRC 101832 / S2 / LL)).